The chain runs to 543 residues: Chaperonin GroEL (543 aa).

ATP-binding positions include 30–33, lysine 51, 87–91, glycine 415, 480–482, and aspartate 496; these read TLGP, DGTTT, and DAA.

This sequence belongs to the chaperonin (HSP60) family. Forms a cylinder of 14 subunits composed of two heptameric rings stacked back-to-back. Interacts with the co-chaperonin GroES.

It is found in the cytoplasm. It catalyses the reaction ATP + H2O + a folded polypeptide = ADP + phosphate + an unfolded polypeptide.. Its function is as follows. Together with its co-chaperonin GroES, plays an essential role in assisting protein folding. The GroEL-GroES system forms a nano-cage that allows encapsulation of the non-native substrate proteins and provides a physical environment optimized to promote and accelerate protein folding. The polypeptide is Chaperonin GroEL (Hydrogenobaculum sp. (strain Y04AAS1)).